Reading from the N-terminus, the 466-residue chain is Chromosomal replication initiator protein DnaA (466 aa).

Residues 1–86 form a domain I, interacts with DnaA modulators region; it reads MSLSLWQQCL…EVGTKPVTQT (86 aa). Residues 86–129 form a domain II region; sequence TLKTPVHNVVAPAQTTTAQPQRVAPAARSGWDNVPAPAEPTYRS. Residues 130–346 are domain III, AAA+ region; sequence NVNVKHTFDN…GALNRVIANA (217 aa). The ATP site is built by glycine 174, glycine 176, lysine 177, and threonine 178. A domain IV, binds dsDNA region spans residues 347–466; the sequence is NFTGRAITID…FSNLIRTLSS (120 aa).

This sequence belongs to the DnaA family. In terms of assembly, oligomerizes as a right-handed, spiral filament on DNA at oriC.

It localises to the cytoplasm. Plays an essential role in the initiation and regulation of chromosomal replication. ATP-DnaA binds to the origin of replication (oriC) to initiate formation of the DNA replication initiation complex once per cell cycle. Binds the DnaA box (a 9 base pair repeat at the origin) and separates the double-stranded (ds)DNA. Forms a right-handed helical filament on oriC DNA; dsDNA binds to the exterior of the filament while single-stranded (ss)DNA is stabiized in the filament's interior. The ATP-DnaA-oriC complex binds and stabilizes one strand of the AT-rich DNA unwinding element (DUE), permitting loading of DNA polymerase. After initiation quickly degrades to an ADP-DnaA complex that is not apt for DNA replication. Binds acidic phospholipids. The chain is Chromosomal replication initiator protein DnaA from Salmonella agona (strain SL483).